A 233-amino-acid polypeptide reads, in one-letter code: UPF0502 protein YpsIP31758_2048 (233 aa).

The protein belongs to the UPF0502 family.

The chain is UPF0502 protein YpsIP31758_2048 from Yersinia pseudotuberculosis serotype O:1b (strain IP 31758).